A 432-amino-acid chain; its full sequence is Eukaryotic translation initiation factor 3 subunit M (432 aa).

Residues 184–356 form the PCI domain; it reads EEEEAYQHIL…KVFLIHSVRY (173 aa). 2 stretches are compositionally biased toward basic and acidic residues: residues 392–401 and 423–432; these read AQQEAERKLV and QHRERNDNDD. Positions 392–432 are disordered; sequence AQQEAERKLVEASTQHNNDRGNQRRGGNRGQQHRERNDNDD.

The protein belongs to the eIF-3 subunit M family. Component of the eukaryotic translation initiation factor 3 (eIF-3) complex.

It localises to the cytoplasm. Component of the eukaryotic translation initiation factor 3 (eIF-3) complex, which is involved in protein synthesis of a specialized repertoire of mRNAs and, together with other initiation factors, stimulates binding of mRNA and methionyl-tRNAi to the 40S ribosome. The eIF-3 complex specifically targets and initiates translation of a subset of mRNAs involved in cell proliferation. In Pyricularia oryzae (strain 70-15 / ATCC MYA-4617 / FGSC 8958) (Rice blast fungus), this protein is Eukaryotic translation initiation factor 3 subunit M.